Here is a 305-residue protein sequence, read N- to C-terminus: 4-diphosphocytidyl-2-C-methyl-D-erythritol kinase (305 aa).

Residue K17 is part of the active site. 111–121 is a binding site for ATP; it reads PVASGIGGGSA. The active site involves D154.

It belongs to the GHMP kinase family. IspE subfamily.

It carries out the reaction 4-CDP-2-C-methyl-D-erythritol + ATP = 4-CDP-2-C-methyl-D-erythritol 2-phosphate + ADP + H(+). The protein operates within isoprenoid biosynthesis; isopentenyl diphosphate biosynthesis via DXP pathway; isopentenyl diphosphate from 1-deoxy-D-xylulose 5-phosphate: step 3/6. In terms of biological role, catalyzes the phosphorylation of the position 2 hydroxy group of 4-diphosphocytidyl-2C-methyl-D-erythritol. The sequence is that of 4-diphosphocytidyl-2-C-methyl-D-erythritol kinase from Gluconacetobacter diazotrophicus (strain ATCC 49037 / DSM 5601 / CCUG 37298 / CIP 103539 / LMG 7603 / PAl5).